A 699-amino-acid chain; its full sequence is Ciliated left-right organizer metallopeptidase (699 aa).

Residues 1-18 form the signal peptide; it reads MKMWRLLLLGVATGRCLH. Topologically, residues 19 to 663 are extracellular; that stretch reads EETQKSVRLL…SLDHNPSMTE (645 aa). H238 provides a ligand contact to Zn(2+). E239 is a catalytic residue. Residues H242 and H318 each contribute to the Zn(2+) site. A helical membrane pass occupies residues 664–684; sequence LLLSTGFCLLVLILVGALGTL. At 685-699 the chain is on the cytoplasmic side; it reads AYQKRAMLQVAPSTT.

Belongs to the peptidase M8 family. The cofactor is Zn(2+). As to expression, specifically expressed in ciliated left-right organizer.

It is found in the membrane. In terms of biological role, putative metalloproteinase that plays a role in left-right patterning process. In Mus musculus (Mouse), this protein is Ciliated left-right organizer metallopeptidase.